We begin with the raw amino-acid sequence, 144 residues long: Transcriptional regulator MraZ (144 aa).

2 consecutive SpoVT-AbrB domains span residues 6-48 and 77-120; these read TYTP…PTDV and ADEG…DPVR.

Belongs to the MraZ family. As to quaternary structure, forms oligomers.

The protein localises to the cytoplasm. The protein resides in the nucleoid. This is Transcriptional regulator MraZ from Nocardioides sp. (strain ATCC BAA-499 / JS614).